The primary structure comprises 308 residues: Ribosomal RNA large subunit methyltransferase F (308 aa).

This sequence belongs to the methyltransferase superfamily. METTL16/RlmF family.

The protein localises to the cytoplasm. The enzyme catalyses adenosine(1618) in 23S rRNA + S-adenosyl-L-methionine = N(6)-methyladenosine(1618) in 23S rRNA + S-adenosyl-L-homocysteine + H(+). Specifically methylates the adenine in position 1618 of 23S rRNA. The sequence is that of Ribosomal RNA large subunit methyltransferase F from Shigella boydii serotype 18 (strain CDC 3083-94 / BS512).